A 597-amino-acid chain; its full sequence is MTDSSPSQHLFADVLARVHRACAALAEEGALPSGLDLARIVVEPPRDASHGDMATNAAMVLAKDAKAKPRDLAERIVTKLRADDLIESADIAGPGFINLTLKLPVWADVLRDVLRDGEGYGRSAIGAGEKVNVEYVSANPTGPMHVGHCRGAVFGDALASLLSFAGYDVTREYYINDAGSQVDVLARSAFLRYREALGEDIGEIPDGLYPGDYLKPVGQALAAGHGDSLVKAPEAEWLGLVRAKAIGMMMEMIRGDLAALNIRHDVFFSERSLIDGSADRVAETIGFLREKGDVYEGRLPPPKGAPVEDYEDREQTLFRATAYGDDVDRPLKKSDGGYTYFASDIAYHKTKFDRGFHNMVDVWGADHGGYIKRVQAAIKAVTSGKGTLDVKIVQLVKLLRNGEPVKMSKRAGDFVTLREVVEEVGSDAVRFMMLFRKNDAVLDFDLARVIEQSKDNPVFYVQYGHARGFSIFRNAREVFPDLPEADAERRQFLGTADLERLSDPAELGLLRKLALYPRTVEAAAAAHEPHRIAFYLYDLASEFHALWTKGRDLPHLRFIINNDAQITRARLALVQGVVAVLASGLTVLGVHAPTEMR.

Positions 138–148 (ANPTGPMHVGH) match the 'HIGH' region motif.

This sequence belongs to the class-I aminoacyl-tRNA synthetase family. In terms of assembly, monomer.

It is found in the cytoplasm. The catalysed reaction is tRNA(Arg) + L-arginine + ATP = L-arginyl-tRNA(Arg) + AMP + diphosphate. In Nitrobacter winogradskyi (strain ATCC 25391 / DSM 10237 / CIP 104748 / NCIMB 11846 / Nb-255), this protein is Arginine--tRNA ligase.